The primary structure comprises 367 residues: tRNA pseudouridine synthase D (367 aa).

The Nucleophile role is filled by aspartate 80. The TRUD domain maps to 156–316; sequence GIPNWFGEQR…LKQERRALRL (161 aa).

It belongs to the pseudouridine synthase TruD family.

It catalyses the reaction uridine(13) in tRNA = pseudouridine(13) in tRNA. In terms of biological role, responsible for synthesis of pseudouridine from uracil-13 in transfer RNAs. This chain is tRNA pseudouridine synthase D, found in Xanthomonas campestris pv. campestris (strain 8004).